A 473-amino-acid polypeptide reads, in one-letter code: Photosystem II CP43 reaction center protein (473 aa).

Residues 1-14 (MKTLYSLRRFYHVE) constitute a propeptide that is removed on maturation. Thr15 carries the N-acetylthreonine modification. Residue Thr15 is modified to Phosphothreonine. Transmembrane regions (helical) follow at residues 69-93 (LFEV…PHLA), 134-155 (LLGP…KDRN), 178-200 (KALY…RKIT), 255-275 (KPFA…LSYS), and 291-312 (WFNN…ASQA). A [CaMn4O5] cluster-binding site is contributed by Glu367. The helical transmembrane segment at 447–471 (RARAAAAGFEKGIDRDFEPVLSMTP) threads the bilayer.

It belongs to the PsbB/PsbC family. PsbC subfamily. PSII is composed of 1 copy each of membrane proteins PsbA, PsbB, PsbC, PsbD, PsbE, PsbF, PsbH, PsbI, PsbJ, PsbK, PsbL, PsbM, PsbT, PsbX, PsbY, PsbZ, Psb30/Ycf12, at least 3 peripheral proteins of the oxygen-evolving complex and a large number of cofactors. It forms dimeric complexes. The cofactor is Binds multiple chlorophylls and provides some of the ligands for the Ca-4Mn-5O cluster of the oxygen-evolving complex. It may also provide a ligand for a Cl- that is required for oxygen evolution. PSII binds additional chlorophylls, carotenoids and specific lipids..

Its subcellular location is the plastid. The protein localises to the chloroplast thylakoid membrane. One of the components of the core complex of photosystem II (PSII). It binds chlorophyll and helps catalyze the primary light-induced photochemical processes of PSII. PSII is a light-driven water:plastoquinone oxidoreductase, using light energy to abstract electrons from H(2)O, generating O(2) and a proton gradient subsequently used for ATP formation. This is Photosystem II CP43 reaction center protein from Ipomoea purpurea (Common morning glory).